Here is a 231-residue protein sequence, read N- to C-terminus: Ribonuclease 3 (231 aa).

Residues 7-135 (IQAIESKLNF…ILGAVYLDGG (129 aa)) form the RNase III domain. Glutamate 48 serves as a coordination point for Mg(2+). Residue aspartate 52 is part of the active site. Positions 121 and 124 each coordinate Mg(2+). Glutamate 124 is an active-site residue. Positions 160–229 (NPKNRLQQFT…AKQALSTHDN (70 aa)) constitute a DRBM domain.

It belongs to the ribonuclease III family. Homodimer. It depends on Mg(2+) as a cofactor.

The protein localises to the cytoplasm. It catalyses the reaction Endonucleolytic cleavage to 5'-phosphomonoester.. Its function is as follows. Digests double-stranded RNA. Involved in the processing of primary rRNA transcript to yield the immediate precursors to the large and small rRNAs (23S and 16S). Processes some mRNAs, and tRNAs when they are encoded in the rRNA operon. Processes pre-crRNA and tracrRNA of type II CRISPR loci if present in the organism. The protein is Ribonuclease 3 of Chlamydia trachomatis serovar A (strain ATCC VR-571B / DSM 19440 / HAR-13).